The sequence spans 116 residues: Large ribosomal subunit protein bL20c (116 aa).

This sequence belongs to the bacterial ribosomal protein bL20 family.

It is found in the plastid. It localises to the chloroplast. In terms of biological role, binds directly to 23S ribosomal RNA and is necessary for the in vitro assembly process of the 50S ribosomal subunit. It is not involved in the protein synthesizing functions of that subunit. This Cyanidioschyzon merolae (strain NIES-3377 / 10D) (Unicellular red alga) protein is Large ribosomal subunit protein bL20c.